Reading from the N-terminus, the 423-residue chain is Methionine aminopeptidase 2 (423 aa).

The segment covering 1–17 (MTDVIDAKPEEAKKVPP) has biased composition (basic and acidic residues). The interval 1–89 (MTDVIDAKPE…IQPYKDDNAY (89 aa)) is disordered. The span at 18-29 (EVEDEDSGDESA) shows a compositional bias: acidic residues. Residues 41-54 (KKKKKKKKPKKKKK) show a composition bias toward basic residues. Position 176 (His176) interacts with substrate. Residues Asp196, Asp207, and His276 each coordinate a divalent metal cation. Residue His284 coordinates substrate. A divalent metal cation-binding residues include Glu309 and Glu404.

The protein belongs to the peptidase M24A family. Methionine aminopeptidase eukaryotic type 2 subfamily. It depends on Co(2+) as a cofactor. Zn(2+) is required as a cofactor. Requires Mn(2+) as cofactor. The cofactor is Fe(2+).

The protein localises to the cytoplasm. The enzyme catalyses Release of N-terminal amino acids, preferentially methionine, from peptides and arylamides.. In terms of biological role, cotranslationally removes the N-terminal methionine from nascent proteins. The N-terminal methionine is often cleaved when the second residue in the primary sequence is small and uncharged (Met-Ala-, Cys, Gly, Pro, Ser, Thr, or Val). This is Methionine aminopeptidase 2 from Schizophyllum commune (strain H4-8 / FGSC 9210) (Split gill fungus).